The following is a 202-amino-acid chain: Potassium-transporting ATPase KdpC subunit 1 (202 aa).

The chain crosses the membrane as a helical span at residues 17–37 (LWVIAAVIYPFFMIAVGQIVF).

This sequence belongs to the KdpC family. As to quaternary structure, the system is composed of three essential subunits: KdpA, KdpB and KdpC.

It is found in the cell inner membrane. Its function is as follows. Part of the high-affinity ATP-driven potassium transport (or Kdp) system, which catalyzes the hydrolysis of ATP coupled with the electrogenic transport of potassium into the cytoplasm. This subunit acts as a catalytic chaperone that increases the ATP-binding affinity of the ATP-hydrolyzing subunit KdpB by the formation of a transient KdpB/KdpC/ATP ternary complex. In Nostoc sp. (strain PCC 7120 / SAG 25.82 / UTEX 2576), this protein is Potassium-transporting ATPase KdpC subunit 1.